A 672-amino-acid polypeptide reads, in one-letter code: DNA ligase (672 aa).

NAD(+)-binding positions include D35 to D39, S84 to L85, and E116. K118 functions as the N6-AMP-lysine intermediate in the catalytic mechanism. The NAD(+) site is built by R139, E179, K295, and K319. Residues C413, C416, C431, and C436 each contribute to the Zn(2+) site. The BRCT domain occupies P593–I672.

This sequence belongs to the NAD-dependent DNA ligase family. LigA subfamily. It depends on Mg(2+) as a cofactor. Mn(2+) is required as a cofactor.

It catalyses the reaction NAD(+) + (deoxyribonucleotide)n-3'-hydroxyl + 5'-phospho-(deoxyribonucleotide)m = (deoxyribonucleotide)n+m + AMP + beta-nicotinamide D-nucleotide.. In terms of biological role, DNA ligase that catalyzes the formation of phosphodiester linkages between 5'-phosphoryl and 3'-hydroxyl groups in double-stranded DNA using NAD as a coenzyme and as the energy source for the reaction. It is essential for DNA replication and repair of damaged DNA. This chain is DNA ligase, found in Syntrophus aciditrophicus (strain SB).